Here is a 274-residue protein sequence, read N- to C-terminus: Deoxyribonuclease TATDN3 (274 aa).

Residues H12, H14, E107, H147, H170, and D218 each contribute to the Zn(2+) site.

It belongs to the metallo-dependent hydrolases superfamily. TatD-type hydrolase family. Requires Mn(2+) as cofactor. It depends on Ca(2+) as a cofactor. Mg(2+) serves as cofactor. The cofactor is Zn(2+).

Its subcellular location is the nucleus. With respect to regulation, the 3'-exonuclease activity is sensitive to the metal ion present in the active site, whereas the AP endodeoxyribonuclease activity is observed in a variety of divalent metal cofactors. 3'-exoxonuclease activity is suppressed in the presence of Ca(2+), Zn(2+) and Ni(2+). In terms of biological role, exhibits 3'-exonuclease activities and apurinic/apyrimidinic (AP) endonuclease (in vitro). Show preferential AP endonuclease activity on double-stranded DNA substrates and 3'- exonuclease activity on single-stranded DNA. The sequence is that of Deoxyribonuclease TATDN3 (TATDN3) from Homo sapiens (Human).